A 766-amino-acid chain; its full sequence is MASHIVGYPRMGPKRELKFALESFWDGKSSAEDLEKVATDLRASIWKQMADAGIKYIPSNTFSYYDQVLDTAAMLGAVPERYSWTGGEIGFSTYFSMARGNATVPAMEMTKWFDTNYHFIVPELGPNTKFSYSSHKAVNEYKEAKALGVDTVPVLVGPVSYLLLSKPAKGVEKSFALLSLLSSILPVYKEVIAELKAAGATWIQFDEPTLVLDLDSHQLAAFSAAYTELESALSGLNVLIETYFADIPAESYKTLTSLNSVTAYGFDLIRGAKTLDLIKSAGFPSGKYLFAGVVDGRNIWADDLAASLTTLESLEAIVGKDKLVVSTSCSLMHTAVDLVNETKLDSEIKSWLAFAAQKVVEVNALAKALAGQKDEAYFAANAAAQASRRSSPRVTNEEVQKAAAALKGSDHRRATNVSARLDAQQKKLNLPVLPTTTIGSFPQTVELRRVRREYKAKKISEEEYISAIKEEISKVVKIQEELDIDVLVHGEPERNDMVEYFGEQLSGFAFTANGWVQSYGSRCVKPPIIYGDVSRPNPMTVFWSKLAQSMTSRPMKGMLTGPVTILNWSFVRNDQPRFETCYQIALAIKKEVEDLEAGGIQVIQIDEAALREGLPLRKAEHAFYLDWAVHSFRITNCGVQDTTQIHTHMCYSNFNDIIHSIINMDADVITIENSRSDEKLLSVFREGVKYGAGIGPGVYDIHSPRIPSTEEIADRVNKMLAVLDTNILWVNPDCGLKTRKYNEVKPALTNMVSAAKLIRTQLASAK.

5-methyltetrahydropteroyltri-L-glutamate is bound by residues K18 and N116. Residues 438-440 and E491 contribute to the L-homocysteine site; that span reads IGS. L-methionine is bound by residues 438 to 440 and E491; that span reads IGS. Residues D496, Y519, 522 to 523, and W568 each bind 5-methyltetrahydropteroyltri-L-glutamate; that span reads RC. An L-homocysteine-binding site is contributed by D606. D606 provides a ligand contact to L-methionine. The Zn(2+) site is built by H648, C650, H659, and E672. H702 functions as the Proton donor in the catalytic mechanism. Zn(2+) is bound at residue C734.

This sequence belongs to the vitamin-B12 independent methionine synthase family. The cofactor is Zn(2+).

Its subcellular location is the cytoplasm. The protein resides in the cytosol. It carries out the reaction 5-methyltetrahydropteroyltri-L-glutamate + L-homocysteine = tetrahydropteroyltri-L-glutamate + L-methionine. It functions in the pathway amino-acid biosynthesis; L-methionine biosynthesis via de novo pathway; L-methionine from L-homocysteine (MetE route): step 1/1. Catalyzes the transfer of a methyl group from 5-methyltetrahydrofolate to homocysteine resulting in methionine formation. This Oryza sativa subsp. japonica (Rice) protein is 5-methyltetrahydropteroyltriglutamate--homocysteine methyltransferase 1.